We begin with the raw amino-acid sequence, 157 residues long: Crossover junction endodeoxyribonuclease RuvC (157 aa).

Residues Asp-7, Glu-70, and Asp-142 contribute to the active site. Residues Asp-7, Glu-70, and Asp-142 each contribute to the Mg(2+) site.

The protein belongs to the RuvC family. Homodimer which binds Holliday junction (HJ) DNA. The HJ becomes 2-fold symmetrical on binding to RuvC with unstacked arms; it has a different conformation from HJ DNA in complex with RuvA. In the full resolvosome a probable DNA-RuvA(4)-RuvB(12)-RuvC(2) complex forms which resolves the HJ. Mg(2+) serves as cofactor.

Its subcellular location is the cytoplasm. It carries out the reaction Endonucleolytic cleavage at a junction such as a reciprocal single-stranded crossover between two homologous DNA duplexes (Holliday junction).. In terms of biological role, the RuvA-RuvB-RuvC complex processes Holliday junction (HJ) DNA during genetic recombination and DNA repair. Endonuclease that resolves HJ intermediates. Cleaves cruciform DNA by making single-stranded nicks across the HJ at symmetrical positions within the homologous arms, yielding a 5'-phosphate and a 3'-hydroxyl group; requires a central core of homology in the junction. The consensus cleavage sequence is 5'-(A/T)TT(C/G)-3'. Cleavage occurs on the 3'-side of the TT dinucleotide at the point of strand exchange. HJ branch migration catalyzed by RuvA-RuvB allows RuvC to scan DNA until it finds its consensus sequence, where it cleaves and resolves the cruciform DNA. The polypeptide is Crossover junction endodeoxyribonuclease RuvC (Synechococcus sp. (strain RCC307)).